The sequence spans 308 residues: MQEAKVAAILGAGAWGTTLAQLLRSNGLEVRQWSRRSETSLAATLAEADLWIMAVSMAGLASVADQVAALQLGDRAIWVSATKGLADLGWRTPSQVLSDRFPLQPITVLSGPNLSKEISQGLPAATVIASRDRHAAAVVQQAFASDRFRVYTNRDPLGTELGGALKNVIAIAVGVCDGLCLGANARSALVTRALAEILRVGAYFGARTETFFGLSGLGDLLATCTSPLSRNYQVGFRLAQGESLAAALTAIAATAEGVSTARVLAQLASREGLELPIAACVAELLDNRISPTTAIERLMARDLKAELV.

The NADPH site is built by Trp-15, Arg-35, Arg-36, and Lys-83. Positions 83 and 111 each coordinate sn-glycerol 3-phosphate. Ser-115 lines the NADPH pocket. 5 residues coordinate sn-glycerol 3-phosphate: Lys-166, Asp-219, Ser-229, Arg-230, and Asn-231. Lys-166 functions as the Proton acceptor in the catalytic mechanism. Arg-230 is an NADPH binding site. Glu-256 lines the NADPH pocket.

This sequence belongs to the NAD-dependent glycerol-3-phosphate dehydrogenase family.

The protein localises to the cytoplasm. It catalyses the reaction sn-glycerol 3-phosphate + NAD(+) = dihydroxyacetone phosphate + NADH + H(+). It carries out the reaction sn-glycerol 3-phosphate + NADP(+) = dihydroxyacetone phosphate + NADPH + H(+). Its pathway is membrane lipid metabolism; glycerophospholipid metabolism. In terms of biological role, catalyzes the reduction of the glycolytic intermediate dihydroxyacetone phosphate (DHAP) to sn-glycerol 3-phosphate (G3P), the key precursor for phospholipid synthesis. This chain is Glycerol-3-phosphate dehydrogenase [NAD(P)+], found in Synechococcus elongatus (strain ATCC 33912 / PCC 7942 / FACHB-805) (Anacystis nidulans R2).